We begin with the raw amino-acid sequence, 477 residues long: Ribulose bisphosphate carboxylase large chain (477 aa).

Positions 1 to 2 are excised as a propeptide; sequence MS. P3 carries the N-acetylproline modification. Position 14 is an N6,N6,N6-trimethyllysine (K14). The substrate site is built by N123 and T173. The active-site Proton acceptor is K175. K177 is a substrate binding site. The Mg(2+) site is built by K201, D203, and E204. K201 carries the post-translational modification N6-carboxylysine. H294 acts as the Proton acceptor in catalysis. R295, H327, and S379 together coordinate substrate.

It belongs to the RuBisCO large chain family. Type I subfamily. In terms of assembly, heterohexadecamer of 8 large chains and 8 small chains; disulfide-linked. The disulfide link is formed within the large subunit homodimers. Mg(2+) is required as a cofactor. The disulfide bond which can form in the large chain dimeric partners within the hexadecamer appears to be associated with oxidative stress and protein turnover.

It localises to the plastid. Its subcellular location is the chloroplast. It catalyses the reaction 2 (2R)-3-phosphoglycerate + 2 H(+) = D-ribulose 1,5-bisphosphate + CO2 + H2O. The catalysed reaction is D-ribulose 1,5-bisphosphate + O2 = 2-phosphoglycolate + (2R)-3-phosphoglycerate + 2 H(+). Its function is as follows. RuBisCO catalyzes two reactions: the carboxylation of D-ribulose 1,5-bisphosphate, the primary event in carbon dioxide fixation, as well as the oxidative fragmentation of the pentose substrate in the photorespiration process. Both reactions occur simultaneously and in competition at the same active site. This Persea americana (Avocado) protein is Ribulose bisphosphate carboxylase large chain.